We begin with the raw amino-acid sequence, 73 residues long: Protein WFDC10B (73 aa).

The signal sequence occupies residues 1–21; it reads MAPQTLLLVLVLCVLLLQAQG. One can recognise a WAP domain in the interval 28-73; it reads RMQRIKVCEKRPSIDLCIHHCSYFQKCETNKICCSAFCGNICMSIL.

As to expression, ubiquitously expressed.

The protein localises to the secreted. In Homo sapiens (Human), this protein is Protein WFDC10B (WFDC10B).